The chain runs to 211 residues: Putative F-box protein At1g52490 (211 aa).

One can recognise an F-box domain in the interval Glu12 to Val59.

The protein is Putative F-box protein At1g52490 of Arabidopsis thaliana (Mouse-ear cress).